A 127-amino-acid polypeptide reads, in one-letter code: MSLIPHDLGRQGEDAAASWLLCKGYRIIRRNYRYRRNEIDIIAMDDRTLCFVEVKTRATIDKGHPLEAVTPQKQKEIIRTARAFLCMEYHEEIDCRFDVVAIIAKGYEKGRLKEFDVEHITDAFWAE.

Belongs to the UPF0102 family.

This Prosthecochloris aestuarii (strain DSM 271 / SK 413) protein is UPF0102 protein Paes_0016.